Here is a 397-residue protein sequence, read N- to C-terminus: Elongation factor Tu (397 aa).

In terms of domain architecture, tr-type G spans 10–207 (LPHCNVGTIG…TLDSYIPQPE (198 aa)). Residues 19–26 (GHVDHGKT) form a G1 region. 19–26 (GHVDHGKT) contributes to the GTP binding site. T26 is a binding site for Mg(2+). Residues 60–64 (GITIN) are G2. A G3 region spans residues 81 to 84 (DCPG). GTP-binding positions include 81-85 (DCPGH) and 136-139 (NKAD). The tract at residues 136 to 139 (NKAD) is G4. The segment at 174–176 (SAR) is G5.

Belongs to the TRAFAC class translation factor GTPase superfamily. Classic translation factor GTPase family. EF-Tu/EF-1A subfamily. Monomer.

The protein resides in the cytoplasm. It catalyses the reaction GTP + H2O = GDP + phosphate + H(+). In terms of biological role, GTP hydrolase that promotes the GTP-dependent binding of aminoacyl-tRNA to the A-site of ribosomes during protein biosynthesis. This Pseudomonas syringae pv. tomato (strain ATCC BAA-871 / DC3000) protein is Elongation factor Tu.